Consider the following 141-residue polypeptide: Large ribosomal subunit protein uL22c (141 aa).

This sequence belongs to the universal ribosomal protein uL22 family. In terms of assembly, part of the 50S ribosomal subunit.

It is found in the plastid. It localises to the chloroplast. Its function is as follows. This protein binds specifically to 23S rRNA. The globular domain of the protein is located near the polypeptide exit tunnel on the outside of the subunit, while an extended beta-hairpin is found that lines the wall of the exit tunnel in the center of the 70S ribosome. The sequence is that of Large ribosomal subunit protein uL22c (rpl22) from Chloranthus spicatus (Chulantree).